The primary structure comprises 819 residues: Leucine--tRNA ligase (819 aa).

A 'HIGH' region motif is present at residues 41–51 (PYPSGTLHVGH). Positions 578–582 (KMSKS) match the 'KMSKS' region motif. Position 581 (Lys581) interacts with ATP.

This sequence belongs to the class-I aminoacyl-tRNA synthetase family.

It is found in the cytoplasm. It catalyses the reaction tRNA(Leu) + L-leucine + ATP = L-leucyl-tRNA(Leu) + AMP + diphosphate. This is Leucine--tRNA ligase from Fervidobacterium nodosum (strain ATCC 35602 / DSM 5306 / Rt17-B1).